Consider the following 458-residue polypeptide: Argininosuccinate lyase (458 aa).

The protein belongs to the lyase 1 family. Argininosuccinate lyase subfamily.

The protein localises to the cytoplasm. The enzyme catalyses 2-(N(omega)-L-arginino)succinate = fumarate + L-arginine. It participates in amino-acid biosynthesis; L-arginine biosynthesis; L-arginine from L-ornithine and carbamoyl phosphate: step 3/3. The polypeptide is Argininosuccinate lyase (Hydrogenobaculum sp. (strain Y04AAS1)).